The sequence spans 97 residues: uncharacterized protein (97 aa).

A disordered region spans residues 27-50 (IGESEDKTNSRGQPATMKEDEVED).

This is an uncharacterized protein from Caldicellulosiruptor saccharolyticus (Caldocellum saccharolyticum).